Here is a 439-residue protein sequence, read N- to C-terminus: Trehalose-phosphatase (439 aa).

Residues aspartate 163 and aspartate 165 each coordinate Mg(2+). Aspartate 165 acts as the Proton donor/acceptor in catalysis. 282-284 (QRK) serves as a coordination point for substrate. Position 373 (aspartate 373) interacts with Mg(2+).

The protein belongs to the gob-1 trehalose phosphatase family. Mg(2+) is required as a cofactor. In terms of tissue distribution, ubiquitously expressed. Strong expression in intestine.

It carries out the reaction alpha,alpha-trehalose 6-phosphate + H2O = alpha,alpha-trehalose + phosphate. Functionally, catalyzes the hydrolysis of trehalose 6-phosphate to trehalose and phosphate; prevents the accumulation of toxic levels of trehalose 6-phosphate. The polypeptide is Trehalose-phosphatase (Caenorhabditis elegans).